The primary structure comprises 851 residues: MEPGRNQLLVAILLTSACLIYCKQYVTVFYGIPAWRNASIPLFCATKNRDTWGTIQCLPDNDDYQEITLNVTEAFDAWDNTVTEQAIEDVWRLFETSIKPCVKLTPLCVAMNCNITSGTTATPSPPNITIIDENSTCIGDNNCTGLGKEEVVECEFNMTGLEQDKKRKYNDAWYSRDVVCDKTNGTGTCYMRHCNTSVIKESCDKHYWDAMKFRYCAPPGFALLRCNDTNYSGFEPKCSKVVAASCTRMMETQTSTWFGFNGTRAENRTYIYWHGKDNRTIISLNKYYNLTMHCKRPGNKTVVPITLMSGRRFHSRPVYNKKPGQAWCWFQGNWIEAMREVKQTLAKHPRYGGTNDTGKINFTKPGIGSDPEVTYMWTNCRGEFLYCNMTWFLNWVENKTNQTHGNYAPCHIRQIINTWHKVGTNVYLPPREGELTCNSTVTSIIANIDSDGNQTNITFSAEVAELYRLELGDYKLIEVTPIPFAPTKEKRYSSAPVRNKRGVFVLGFLGFLATAGSAMGGASLTLSAQSRTLLAGIVQQQQQLLDVVKRQQEMLRLTVWGTKNLQARVTAIEKYLKDQAQLNSWGCAFRQVCHTTVPWVNDSLTPDWNNMTWQEWEKRVHYLEANISQSLEQAQIQQEKNMYELQKLNSWDVFGNWFDLTSWIKYIQYGVYIVVGIIGLRIAIYIVQLLSRLRKGYRPVFSSPPGYLQQIHIHTDRGQPANEETEEDAGDDSGFGLWPWPLNYIQFLIHLLTRLLTGLYNSCRGLLSKNSPTRRLISQSLTAIRDWLRLKAAYLQYGCEWIQEAFRAFARTARETIAGAWRGLCEAAQRIGRGILAVPRRIRQGAEIALL.

An N-terminal signal peptide occupies residues 1–24 (MEPGRNQLLVAILLTSACLIYCKQ). Residues 25–669 (YVTVFYGIPA…LTSWIKYIQY (645 aa)) lie on the Extracellular side of the membrane. Asn37 carries N-linked (GlcNAc...) asparagine; by host glycosylation. Cys44 and Cys57 are oxidised to a cystine. N-linked (GlcNAc...) asparagine; by host glycosylation is found at Asn70, Asn114, Asn127, Asn134, Asn142, Asn157, Asn184, Asn195, Asn227, Asn230, Asn261, Asn267, Asn278, Asn289, Asn299, Asn355, Asn361, Asn388, Asn398, Asn401, Asn438, Asn453, and Asn456. 5 disulfide bridges follow: Cys101/Cys203, Cys108/Cys194, Cys113/Cys154, Cys216/Cys246, and Cys226/Cys238. The tract at residues 113-153 (CNITSGTTATPSPPNITIIDENSTCIGDNNCTGLGKEEVVE) is V1. The tract at residues 154–194 (CEFNMTGLEQDKKRKYNDAWYSRDVVCDKTNGTGTCYMRHC) is V2. A V3 region spans residues 294–327 (CKRPGNKTVVPITLMSGRRFHSRPVYNKKPGQAW). A disulfide bridge links Cys294 with Cys328. Cystine bridges form between Cys380–Cys437 and Cys387–Cys410. The tract at residues 387 to 410 (CNMTWFLNWVENKTNQTHGNYAPC) is V4. Positions 453–459 (NQTNITF) are V5. The segment at 502–522 (GVFVLGFLGFLATAGSAMGGA) is fusion peptide. Residues 565–581 (LQARVTAIEKYLKDQAQ) are immunosuppression. Residues Asn601, Asn610, and Asn626 are each glycosylated (N-linked (GlcNAc...) asparagine; by host). An MPER; binding to GalCer region spans residues 647–668 (KLNSWDVFGNWFDLTSWIKYIQ). Residues 670 to 690 (GVYIVVGIIGLRIAIYIVQLL) form a helical membrane-spanning segment. Topologically, residues 691-851 (SRLRKGYRPV…IRQGAEIALL (161 aa)) are cytoplasmic. The YXXV motif; contains endocytosis signal motif lies at 697–700 (YRPV). The S-palmitoyl cysteine; by host moiety is linked to residue Cys763. A Di-leucine internalization motif motif is present at residues 850 to 851 (LL).

The mature envelope protein (Env) consists of a homotrimer of non-covalently associated gp120-gp41 heterodimers. The resulting complex protrudes from the virus surface as a spike. There seems to be as few as 10 spikes on the average virion. Interacts with human CD4, CCR5 and CXCR4, to form a P4HB/PDI-CD4-CXCR4-gp120 complex. Gp120 also interacts with the C-type lectins CD209/DC-SIGN and CLEC4M/DC-SIGNR (collectively referred to as DC-SIGN(R)). Gp120 and gp41 interact with GalCer. As to quaternary structure, the mature envelope protein (Env) consists of a homotrimer of non-covalently associated gp120-gp41 heterodimers. The resulting complex protrudes from the virus surface as a spike. There seems to be as few as 10 spikes on the average virion. In terms of processing, specific enzymatic cleavages in vivo yield mature proteins. Envelope glycoproteins are synthesized as an inactive precursor that is heavily N-glycosylated and processed likely by host cell furin in the Golgi to yield the mature SU and TM proteins. The cleavage site between SU and TM requires the minimal sequence [KR]-X-[KR]-R. Post-translationally, palmitoylation of the transmembrane protein and of Env polyprotein (prior to its proteolytic cleavage) is essential for their association with host cell membrane lipid rafts. Palmitoylation is therefore required for envelope trafficking to classical lipid rafts, but not for viral replication.

The protein localises to the virion membrane. The protein resides in the host cell membrane. It is found in the host endosome membrane. Functionally, the surface protein gp120 (SU) attaches the virus to the host lymphoid cell by binding to the primary receptor CD4. This interaction induces a structural rearrangement creating a high affinity binding site for a chemokine coreceptor like CXCR4 and/or CCR5. This peculiar 2 stage receptor-interaction strategy allows gp120 to maintain the highly conserved coreceptor-binding site in a cryptic conformation, protected from neutralizing antibodies. Since CD4 also displays a binding site for the disulfide-isomerase P4HB/PDI, a P4HB/PDI-CD4-CXCR4-gp120 complex may form. In that complex, P4HB/PDI could reach and reduce gp120 disulfide bonds, causing major conformational changes in gp120. TXN, another PDI family member could also be involved in disulfide rearrangements in Env during fusion. These changes are transmitted to the transmembrane protein gp41 and are thought to activate its fusogenic potential by unmasking its fusion peptide. The surface protein gp120 is a ligand for CD209/DC-SIGN and CLEC4M/DC-SIGNR, which are respectively found on dendritic cells (DCs), and on endothelial cells of liver sinusoids and lymph node sinuses. These interactions allow capture of viral particles at mucosal surfaces by these cells and subsequent transmission to permissive cells. DCs are professional antigen presenting cells, critical for host immunity by inducing specific immune responses against a broad variety of pathogens. They act as sentinels in various tissues where they take up antigen, process it, and present it to T-cells following migration to lymphoid organs. HIV subverts the migration properties of dendritic cells to gain access to CD4+ T-cells in lymph nodes. Virus transmission to permissive T-cells occurs either in trans (without DCs infection, through viral capture and transmission), or in cis (following DCs productive infection, through the usual CD4-gp120 interaction), thereby inducing a robust infection. In trans infection, bound virions remain infectious over days and it is proposed that they are not degraded, but protected in non-lysosomal acidic organelles within the DCs close to the cell membrane thus contributing to the viral infectious potential during DCs' migration from the periphery to the lymphoid tissues. On arrival at lymphoid tissues, intact virions recycle back to DCs' cell surface allowing virus transmission to CD4+ T-cells. Virion capture also seems to lead to MHC-II-restricted viral antigen presentation, and probably to the activation of HIV-specific CD4+ cells. Its function is as follows. The transmembrane protein gp41 (TM) acts as a class I viral fusion protein. Under the current model, the protein has at least 3 conformational states: pre-fusion native state, pre-hairpin intermediate state, and post-fusion hairpin state. During fusion of viral and target intracellular membranes, the coiled coil regions (heptad repeats) assume a trimer-of-hairpins structure, positioning the fusion peptide in close proximity to the C-terminal region of the ectodomain. The formation of this structure appears to drive apposition and subsequent fusion of viral and target cell membranes. Complete fusion occurs in host cell endosomes and is dynamin-dependent, however some lipid transfer might occur at the plasma membrane. The virus undergoes clathrin-dependent internalization long before endosomal fusion, thus minimizing the surface exposure of conserved viral epitopes during fusion and reducing the efficacy of inhibitors targeting these epitopes. Membranes fusion leads to delivery of the nucleocapsid into the cytoplasm. In terms of biological role, the envelope glycoprotein gp160 precursor down-modulates cell surface CD4 antigen by interacting with it in the endoplasmic reticulum and blocking its transport to the cell surface. Functionally, the gp120-gp41 heterodimer seems to contribute to T-cell depletion during HIV-1 infection. The envelope glycoproteins expressed on the surface of infected cells induce apoptosis through an interaction with uninfected cells expressing the receptor (CD4) and the coreceptors CXCR4 or CCR5. This type of bystander killing may be obtained by at least three distinct mechanisms. First, the interaction between the 2 cells can induce cellular fusion followed by nuclear fusion within the syncytium. Syncytia are condemned to die from apoptosis. Second, the 2 interacting cells may not fuse entirely and simply exchange plasma membrane lipids, after a sort of hemifusion process, followed by rapid death. Third, it is possible that virus-infected cells, on the point of undergoing apoptosis, fuse with CD4-expressing cells, in which case apoptosis is rapidly transmitted from one cell to the other and thus occurs in a sort of contagious fashion. The gp120-gp41 heterodimer allows rapid transcytosis of the virus through CD4 negative cells such as simple epithelial monolayers of the intestinal, rectal and endocervical epithelial barriers. Both gp120 and gp41 specifically recognize glycosphingolipids galactosyl-ceramide (GalCer) or 3' sulfo-galactosyl-ceramide (GalS) present in the lipid rafts structures of epithelial cells. Binding to these alternative receptors allows the rapid transcytosis of the virus through the epithelial cells. This transcytotic vesicle-mediated transport of virions from the apical side to the basolateral side of the epithelial cells does not involve infection of the cells themselves. In Human immunodeficiency virus type 2 subtype A (isolate D194) (HIV-2), this protein is Envelope glycoprotein gp160 (env).